The primary structure comprises 316 residues: Ribosomal RNA large subunit methyltransferase F (316 aa).

A disordered region spans residues 200–222 (EEANKSTSRKVSNLNPKEKKNTN). Positions 204-214 (KSTSRKVSNLN) are enriched in polar residues.

Belongs to the methyltransferase superfamily. METTL16/RlmF family.

It localises to the cytoplasm. The enzyme catalyses adenosine(1618) in 23S rRNA + S-adenosyl-L-methionine = N(6)-methyladenosine(1618) in 23S rRNA + S-adenosyl-L-homocysteine + H(+). Functionally, specifically methylates the adenine in position 1618 of 23S rRNA. This is Ribosomal RNA large subunit methyltransferase F from Flavobacterium johnsoniae (strain ATCC 17061 / DSM 2064 / JCM 8514 / BCRC 14874 / CCUG 350202 / NBRC 14942 / NCIMB 11054 / UW101) (Cytophaga johnsonae).